The following is a 2149-amino-acid chain: MSDTPSTGFSMIHPTSSEGQVPSPRHLSLTHPVVAKRISFYKSGDPQFGGVRVVVNPRSFKSFDALLDNLSRKVPLPFGVRNISTPRGRHSITRLEELEDGESYLCSHGRKVQPVDLDKARRRPRPWLSSRAVSTHAPPHSVAAPGMPRAPRSLVVFRNGDPKTRRAVLLSRKVTQSFEAFLQHLTEVMQRPVVKLYATDGRRVPSLQAVILSSGAVVAAGREPFKPGNYDIQKYLLPARLPGISQRVYPKGNGKSESRKISTHMASSSRSQIYSVSSEKTHNNDCYLDYSFVPENYLALEKNDSQNLPIYPSEDDVEKSIIFNQDGTMTVEMKVRFRIKEEETIKWTTTVSKTGPSNNDEKSEMSFPGRTESRSSGLKLAACSFSADVSPTERSSNQEGSLAEEINIQMTDQEAETCSSASWENATVDTDIIQGTQDQAKHRFYRPPTPGLRRVRQKKSVIGSVTLVSETEVQEKMIGQFSYSEERESGENKSEYHMFTHSCSKMSSVSNKPVLVQINNSDQMEESSLERKKENRLLKSSAISAGVIEITSQKMLELSHNNGLPSTISNNSIVEEDVVDSVVSDNKTGIKNLRTYGNTSDRFSPVSADATHFSSNKSRADKNISEAPASVASSTVTARIDRLINEFAQCGLTKLPKTEKKILSSVASKKKKKKSQQQAINSRYQDGQLATTGILNKNERINAGGRITKEMILQDSDSPLKGGVLCEEDLRTSETVIESNTFCSKSNLNPMISKNFHRNKLNTTQNSKVQGLLTKRKSRPLRKISLGTPKKREIGQGDKVFPHNESKYSKSTCENKSLFHVFNLLEQKPKHFSGPRSQAEVASGYLRGMAKKSLVSKVTDSHITLKSQKKQKGDKLKASAILSKQHAATRANSLASLKKPDFPEDIAHPSVQTYIQNWLHNINPYPTLKPIKSAPVCKNEISVVNCNNSFSGNDPHTSSGKINNFVMESNKHITKIASLTGDNLCKEGDKSFIANDTGEDLCETQVGSLNDAYLVSLHEHCTSPQSAINDRNTKSRISPEKSGPEINLVYQEINLAKKRQSVEAAIQVDPIEEDTPKDLLPVLMLHQLQASVPSTPKTQNGVVRMPGSLADVSFPSAICNSSTNLLLAWLLVLNLKGSMNSFCQGDAHKTTNKSSETLALLEILKHIAITEEADDLKAAVANLVESTTNHFGLSEKEQDTVPIDLSANCSIVNIQSVPKCNENEGTQGIFSFDGGCSAVEACAPEVCVLELTYPPREVCTVNKAYVPKETCNLSDTFFPSDGYTVDRTSMNKACFVGEVCSLTDTVFSDKACAQKENHIYEGACATDETCVPVDVCNTTGFLNSKQNTYTDNLESTEELERGDDVQKDLNILTDPEYKNGFNTLVSHQNVSNLSPCGLCVSEEAEFDKKHSSADDFKNCSLNLFQDKNAYTSFDMEEPRTSEEPGSVTNSVTSSERNISELESFEELENQDTDIFNTEINVGEKATEEFIQEEIEASKTLELLDISSKNIMVEERKNGIIYETISKRLATPPSLVFCYDSKQNNEKETNEGETNMVKMMVKSMETGSYSESSPDMKKCIKSPVTSDWSDYRPDSDSEQAYKTSSDDPNDSGELEKEYNIGFVKRAIEKLYGKADIIKPSFFPGSTRKSQVCPYNSVEFQCTRRASLYDSEGQSFGSSERVSSSSPVLQEFQEEGQDKCDINHVRNNYCGGDIVEPGTKENDHSRVLTDIEEGVLIDKGKWLLKENHLLRMSYENPGVCGNADTTSVDTLLDNNSSEVPYSHFGNLAPGPTMDELSSSELEELTQPLELKCNYFKMPHGSDSEPFHEDLLGVHNETCDKERIANHHTEEKCPHQSERICTSVTHSFMSAGNKVYPVSDDAIKNQPLPGSNMIHGTLQETDSLDKLYALCGQHCPILTVTIQPVNEEDRGFAYRKESDIENFLGFYLWMKIHPYLLQTDKNMFREENNKASMRKNLINNATGDIFDEFYFSNIFDLMDKRRKQKRINFLELQEAGNLKKFQPDLKERFCMYFLHTSSLVVGNMNSNTQDLSSQTNEIFKAVDENNNLLNNRFQGSRTNLNQVVRENISRYFFEMLGQACLLDICQVETSLNISNRNILEELCMFEDENIFIWEEEDILNLTDLESSREQDL.

Positions 1–20 (MSDTPSTGFSMIHPTSSEGQ) are enriched in polar residues. Residues 1 to 25 (MSDTPSTGFSMIHPTSSEGQVPSPR) form a disordered region. Residues 36–118 (KRISFYKSGD…GRKVQPVDLD (83 aa)) enclose the Doublecortin 1 domain. A disordered region spans residues 127–148 (WLSSRAVSTHAPPHSVAAPGMP). The 80-residue stretch at 152-231 (RSLVVFRNGD…REPFKPGNYD (80 aa)) folds into the Doublecortin 2 domain. 3 disordered regions span residues 351-373 (VSKT…RTES), 1435-1456 (MEEP…SSER), and 1583-1613 (VTSD…SGEL). The segment covering 1446-1456 (SVTNSVTSSER) has biased composition (polar residues).

Interacts (via the doublecortin domains) with microtubules. Interacts with RP1L1. Interacts with MAK.

It is found in the cytoplasm. It localises to the cytoskeleton. The protein resides in the cilium axoneme. The protein localises to the cell projection. Its subcellular location is the cilium. It is found in the photoreceptor outer segment. In terms of biological role, microtubule-associated protein regulating the stability and length of the microtubule-based axoneme of photoreceptors. Required for the differentiation of photoreceptor cells, it plays a role in the organization of the outer segment of rod and cone photoreceptors ensuring the correct orientation and higher-order stacking of outer segment disks along the photoreceptor axoneme. This Saimiri boliviensis boliviensis (Bolivian squirrel monkey) protein is Oxygen-regulated protein 1 (RP1).